The sequence spans 344 residues: DNA integrity scanning protein DisA (344 aa).

One can recognise a DAC domain in the interval Met1–Glu133. ATP is bound by residues Gly61 and Thr92–Thr96.

Belongs to the DisA family. Homooctamer. Requires Mg(2+) as cofactor.

The enzyme catalyses 2 ATP = 3',3'-c-di-AMP + 2 diphosphate. In terms of biological role, participates in a DNA-damage check-point. DisA forms globular foci that rapidly scan along the chromosomes searching for lesions. Its function is as follows. Also has diadenylate cyclase activity, catalyzing the condensation of 2 ATP molecules into cyclic di-AMP (c-di-AMP). c-di-AMP likely acts as a signaling molecule that may couple DNA integrity with a cellular process. The chain is DNA integrity scanning protein DisA from Cutibacterium acnes (strain DSM 16379 / KPA171202) (Propionibacterium acnes).